Reading from the N-terminus, the 118-residue chain is Large ribosomal subunit protein bL19 (118 aa).

The protein belongs to the bacterial ribosomal protein bL19 family.

Functionally, this protein is located at the 30S-50S ribosomal subunit interface and may play a role in the structure and function of the aminoacyl-tRNA binding site. This is Large ribosomal subunit protein bL19 from Lactiplantibacillus plantarum (strain ATCC BAA-793 / NCIMB 8826 / WCFS1) (Lactobacillus plantarum).